Reading from the N-terminus, the 654-residue chain is ATP-dependent rRNA helicase spb-4 (654 aa).

The Q motif signature appears at Trp17–Lys45. The 202-residue stretch at Leu48–Ile249 folds into the Helicase ATP-binding domain. An ATP-binding site is contributed by Ala61–Thr68. The DEAD box motif lies at Asp197–Asp200. In terms of domain architecture, Helicase C-terminal spans Ala286 to Ser444. The stretch at Arg531–Asn631 forms a coiled coil. Residues Trp542–Gln577 are compositionally biased toward basic and acidic residues. Residues Trp542–Asp654 are disordered. The segment covering Arg578–Ala588 has biased composition (basic residues). Basic and acidic residues predominate over residues Lys589–Ala625. Residues Asp644–Asp654 are compositionally biased toward acidic residues.

The protein belongs to the DEAD box helicase family. DDX55/SPB4 subfamily. As to quaternary structure, component of pre-60S ribosomal complexes.

It localises to the nucleus. It is found in the nucleolus. The catalysed reaction is ATP + H2O = ADP + phosphate + H(+). ATP-binding RNA helicase involved in the biogenesis of 60S ribosomal subunits. Binds 90S pre-ribosomal particles and dissociates from pre-60S ribosomal particles after processing of 27SB pre-rRNA. Required for the normal formation of 18S rRNA through the processing of pre-rRNAs at sites A0, A1 and A2, and the normal formation of 25S and 5.8S rRNAs through the processing of pre-rRNAs at sites C1 and C2. In Neurospora crassa (strain ATCC 24698 / 74-OR23-1A / CBS 708.71 / DSM 1257 / FGSC 987), this protein is ATP-dependent rRNA helicase spb-4.